Consider the following 1010-residue polypeptide: Ubiquitin conjugation factor E4 (1010 aa).

Residues 13–70 (AKLQQTNSEANSSKEPKESNIAPEPKKPDLKKRFIGSKATTSNSEQKEISPPVTSGAP) are disordered. Over residues 24–44 (SSKEPKESNIAPEPKKPDLKK) the composition is skewed to basic and acidic residues. A U-box domain is found at 930–1004 (DIPDYFLDPL…NTFLKSKRNK (75 aa)).

Belongs to the ubiquitin conjugation factor E4 family.

The protein localises to the cytoplasm. The protein resides in the nucleus. It functions in the pathway protein modification; protein ubiquitination. E4 ubiquitin chain-elongation enzyme specifically involved in polyubiquitin chain assembly. Binds to cdc48 and elongates mono- and diubiquitinated ERAD substrates presented by the ufd1-npl4-cdc48 (UNC) AAA ATPase complex to a chain length of 4 to 6 ubiquitin moieties. Delivers these polyubiquitinated substrates to downstream ERAD components, which target them to the proteasome. Enhances ubiquitination at 'Lys-48', but not at 'Lys-29' of the Ub moiety. In Schizosaccharomyces pombe (strain 972 / ATCC 24843) (Fission yeast), this protein is Ubiquitin conjugation factor E4 (ufd2).